The chain runs to 363 residues: Alanine racemase (363 aa).

The active-site Proton acceptor; specific for D-alanine is lysine 39. N6-(pyridoxal phosphate)lysine is present on lysine 39. Arginine 134 contributes to the substrate binding site. Tyrosine 251 serves as the catalytic Proton acceptor; specific for L-alanine. Position 299 (methionine 299) interacts with substrate.

It belongs to the alanine racemase family. Pyridoxal 5'-phosphate is required as a cofactor.

It catalyses the reaction L-alanine = D-alanine. It functions in the pathway amino-acid biosynthesis; D-alanine biosynthesis; D-alanine from L-alanine: step 1/1. Catalyzes the interconversion of L-alanine and D-alanine. May also act on other amino acids. This Thermodesulfovibrio yellowstonii (strain ATCC 51303 / DSM 11347 / YP87) protein is Alanine racemase (alr).